The following is a 450-amino-acid chain: L-lysine-epsilon aminotransferase (450 aa).

The pyridoxal 5'-phosphate site is built by Gly127 and Ala128. Residues Arg168 and Gln274 each coordinate 2-oxoglutarate. An L-lysine-binding site is contributed by Arg168. Pyridoxal 5'-phosphate is bound at residue Gln274. Position 300 is an N6-(pyridoxal phosphate)lysine (Lys300). Arg423 is a 2-oxoglutarate binding site.

The protein belongs to the class-III pyridoxal-phosphate-dependent aminotransferase family. Pyridoxal 5'-phosphate serves as cofactor.

It carries out the reaction L-lysine + 2-oxoglutarate = (S)-2-amino-6-oxohexanoate + L-glutamate. Its pathway is antibiotic biosynthesis; cephamycin C biosynthesis. In terms of biological role, catalyzes the transfer of the terminal amino group of L-lysine to alpha-ketoglutarate to yield L-glutamate and 2-aminoadipate 6-semialdehyde ((S)-2-amino-6-oxohexanoate), which is spontaneously converted to the dehydrated form 1-piperideine 6-carboxylate. This Amycolatopsis lactamdurans (Nocardia lactamdurans) protein is L-lysine-epsilon aminotransferase.